We begin with the raw amino-acid sequence, 351 residues long: Ion-translocating oxidoreductase complex subunit D (351 aa).

Transmembrane regions (helical) follow at residues 20–40 (IMLW…YFFG), 44–64 (LIQV…TLSL), 89–109 (LPPL…IIIA), and 123–143 (PAMI…TSWL). Thr187 carries the post-translational modification FMN phosphoryl threonine. The next 5 membrane-spanning stretches (helical) occupy residues 215 to 235 (LSGI…LFLL), 244 to 264 (IPVS…IIAP), 267 to 287 (FAQP…FFIA), 301 to 321 (LIFG…GGYP), and 322 to 342 (DGVA…DYYT).

The protein belongs to the NqrB/RnfD family. In terms of assembly, the complex is composed of six subunits: RnfA, RnfB, RnfC, RnfD, RnfE and RnfG. The cofactor is FMN.

It is found in the cell inner membrane. Its function is as follows. Part of a membrane-bound complex that couples electron transfer with translocation of ions across the membrane. The polypeptide is Ion-translocating oxidoreductase complex subunit D (Pectobacterium atrosepticum (strain SCRI 1043 / ATCC BAA-672) (Erwinia carotovora subsp. atroseptica)).